Here is a 1323-residue protein sequence, read N- to C-terminus: Nck-associated protein 5-like (1323 aa).

Disordered regions lie at residues 1–22 (MDQP…DSME), 113–142 (QIPL…TSLP), 156–175 (QQLR…ALDA), 204–238 (PATP…PWAP), 260–314 (PGEE…DTLL), and 341–714 (GATG…EQPE). Residues 1 to 135 (MDQPAGGTGK…PTSPAPNVSE (135 aa)) are mediates interaction with CDK5RAP2 and is required for homodimerization and microtubule bundle formation. Residues 22–109 (ELSTCQELLH…LQQKLQLTAN (88 aa)) adopt a coiled-coil conformation. Pro residues-rich tracts occupy residues 162-172 (GPGPPATPPPA) and 226-236 (CGPPQPEPSPW). Positions 271 to 298 (ASSRAPPSAQGPSSGPHCAPGSSSSSSS) are enriched in low complexity. Residues 353–364 (PGKPNSPDPGPP) are compositionally biased toward pro residues. Phosphoserine; by CDK1 is present on residues serine 436, serine 447, serine 466, and serine 473. The (S/T)X(I/L)P motif 1 motif lies at 480–483 (SRIP). Residues serine 489, serine 492, and serine 494 each carry the phosphoserine modification. Polar residues predominate over residues 531-542 (LRPSQSTVSTAL). A Phosphoserine; by CDK1 modification is found at serine 573. A compositionally biased stretch (basic and acidic residues) spans 647–660 (RPGDPSHTPLRDRL). At threonine 654 the chain carries Phosphothreonine. Residues 743 to 1136 (RVYSSHSMGA…SGTPSKNLPK (394 aa)) form a mediates interaction with beta-tubulin and is required for microtubule bundle formation region. Serine 760 is modified (phosphoserine; by CDK1). Disordered stretches follow at residues 778-875 (ALCP…HSAI), 892-948 (GQER…EVKT), 979-1003 (AYLS…GQAQ), and 1027-1323 (KELP…GSQG). Residues 799–817 (KPKSPHSSPTKLPSKSPTK) are compositionally biased toward low complexity. The (S/T)X(I/L)P motif 2 motif lies at 808 to 811 (TKLP). Positions 918 to 921 (SKLP) match the (S/T)X(I/L)P motif 3; required for interaction with MAPRE1 motif. Residues 925 to 934 (RRTEATKNKD) are compositionally biased toward basic and acidic residues. Residues 942 to 985 (LRKEVKTEARKLEAESLNISKLMAKAEDLRRALEEEKAYLSRAR) adopt a coiled-coil conformation. A compositionally biased stretch (basic and acidic residues) spans 1027 to 1041 (KELPPKSWREPKPEY). Composition is skewed to polar residues over residues 1097-1112 (VSTT…TRTL) and 1124-1136 (HSSS…NLPK). A compositionally biased stretch (pro residues) spans 1143-1153 (DPPPGAPPARP). Position 1184 is a phosphoserine (serine 1184). 2 stretches are compositionally biased toward polar residues: residues 1225 to 1237 (TFPN…SSSD) and 1264 to 1273 (VDPSRTSTPQ). Residues 1302-1323 (LETSESLSDSLYDSLSSCGSQG) show a composition bias toward low complexity.

As to quaternary structure, homodimer. Interacts with CDK5RAP2. Interacts with MAPRE1. Interacts with beta-tubulin. CDK1/Cyclin B-dependent phosphorylation mediates its dissociation from centrosomes during mitosis.

The protein resides in the cytoplasm. The protein localises to the cytoskeleton. It is found in the microtubule organizing center. Its subcellular location is the centrosome. Regulates microtubule organization and stabilization. Promotes microtubule growth and bundling formation and stabilizes microtubules by increasing intense acetylation of microtubules. Both tubulin-binding and homodimer formation are required for NCKAP5L-mediated microtubule bundle formation. In Mus musculus (Mouse), this protein is Nck-associated protein 5-like (Nckap5l).